Consider the following 496-residue polypeptide: Latent membrane protein 2 (496 aa).

Residues 1–108 (MGSLEMVPMG…PPYSPRDDSS (108 aa)) form a disordered region. Residues 1–123 (MGSLEMVPMG…EAGRGSMNPV (123 aa)) lie on the Cytoplasmic side of the membrane. The span at 27–41 (NNSQYPSASGSSGNT) shows a compositional bias: polar residues. A PPxY motif motif is present at residues 97 to 101 (PPPPY). Tyrosine 112 is modified (phosphotyrosine; by host). The chain crosses the membrane as a helical span at residues 124–144 (CLPVIVAPYLFWLAAIAASCF). The Extracellular portion of the chain corresponds to 145 to 147 (TAS). The chain crosses the membrane as a helical span at residues 148 to 168 (VSTVVTATGLALSLLLLAAVA). Residues 169-177 (SSYAAAQRK) are Cytoplasmic-facing. A helical transmembrane segment spans residues 178–197 (LLTPVTVLTAVVFFAICLTW). The Extracellular segment spans residues 198-210 (RIEDPPFNSLLFA). The helical transmembrane segment at 211–231 (LLAAAGGLQGIYVLVMLVLLI) threads the bilayer. The Cytoplasmic segment spans residues 232 to 240 (LAYRRRWRR). Residues 241-261 (LTVCGGIMFLACVLVLIVDAV) traverse the membrane as a helical segment. Residues 262-266 (LQLSP) are Extracellular-facing. The helical transmembrane segment at 267 to 287 (LLGAVTVVSMTLLLLAFVLWL) threads the bilayer. Residues 288 to 295 (SSPGGLGT) lie on the Cytoplasmic side of the membrane. Residues 296-316 (LGAALLTLAAALALLASLILG) form a helical membrane-spanning segment. Threonine 317 is a topological domain (extracellular). Residues 318 to 338 (LNLTTMFLLMLLWTLVVLLIC) traverse the membrane as a helical segment. Residues 339-353 (SSCSSCPLTKILLAR) lie on the Cytoplasmic side of the membrane. A helical transmembrane segment spans residues 354–374 (LFLYALALLLLASALIAGGSI). Residues 375 to 387 (LQTNFKSLSSTEF) are Extracellular-facing. The chain crosses the membrane as a helical span at residues 388 to 408 (IPNLFCMLLLIVAGILFILAI). Over 409–421 (LTEWGSGNRTYGP) the chain is Cytoplasmic. The helical transmembrane segment at 422 to 442 (VFMCLGGLLTMVAGAVWLTVM) threads the bilayer. Topologically, residues 443-448 (TNTLLS) are extracellular. The chain crosses the membrane as a helical span at residues 449–469 (AWILTAGFLIFLIGFALFGVI). The Cytoplasmic portion of the chain corresponds to 470–496 (RCCRYCCYYCLTLESEERPPTPYRNTV).

Belongs to the herpesviridae LMP-2 family. The cytoplasmic N-terminal domain interacts with human SRC family protein tyrosine kinases SYK and LYN. Binds human ITCH, WWP2 and NEDD4L. Phosphorylated on cytoplasmic N-terminal tyrosine residues, possibly by human LYN. In terms of processing, can be ubiquitinated by human ITCH and WWP2 on the N-terminus in a lysine-independent manner.

It localises to the host cell membrane. It is found in the host endomembrane system. The protein resides in the host cytoplasm. Its subcellular location is the host perinuclear region. In terms of biological role, maintains EBV latent infection of B-lymphocyte, by preventing lytic reactivation of the virus in response to surface immunoglobulin (sIg) cross-linking. Acts like a dominant negative inhibitor of the sIg-associated protein tyrosine kinases, LYN and SYK. Also blocks translocation of the B-cell antigen receptor (BCR) into lipid rafts, preventing the subsequent signaling and accelerated internalization of the BCR upon BCR cross-linking. Serves as a molecular scaffold to recruit SYK, LYN and E3 protein-ubiquitin ligases, such as ITCH and NEDD4L, leading to ubiquitination and potential degradation of both tyrosines kinases. Possesses a constitutive signaling activity in non-transformed cells, inducing bypass of normal B lymphocyte developmental checkpoints allowing immunoglobulin-negative cells to colonize peripheral lymphoid organs. Its function is as follows. May be a negative regulator of isoform LMP2A. This is Latent membrane protein 2 (LMP2) from Homo sapiens (Human).